The following is a 91-amino-acid chain: Glycophorin-B (91 aa).

A signal peptide spans M1–A19. The Extracellular portion of the chain corresponds to L20 to A59. T36 carries O-linked (GalNAc...) threonine glycosylation. S38 is a glycosylation site (O-linked (GalNAc...) serine). Residues P60–I81 traverse the membrane as a helical segment. Topologically, residues S82 to A91 are cytoplasmic.

Belongs to the glycophorin-A family. Component of the ankyrin-1 complex in the erythrocyte, composed of ANK1, RHCE, RHAG, SLC4A1, EPB42, GYPA, GYPB and AQP1. Interacts (via the N-terminal) with RHAG; this interaction bridges the (RHAG)2(RHCE) heterotrimer with the SLC4A1 Band 3 I dimer complexed with GYPA. In terms of processing, the N-terminal extracellular domain is heavily glycosylated on serine and threonine residues.

Its subcellular location is the cell membrane. Component of the ankyrin-1 complex, a multiprotein complex involved in the stability and shape of the erythrocyte membrane. The polypeptide is Glycophorin-B (Homo sapiens (Human)).